We begin with the raw amino-acid sequence, 280 residues long: Fructose-1,6-bisphosphatase class 1 (280 aa).

Residues Glu-64, Asp-83, Leu-85, and Asp-86 each coordinate Mg(2+). Substrate is bound by residues 86–89 (DGSS), Tyr-189, and Lys-220. Glu-226 is a Mg(2+) binding site.

Belongs to the FBPase class 1 family. In terms of assembly, homotetramer. Mg(2+) serves as cofactor.

The protein resides in the cytoplasm. The enzyme catalyses beta-D-fructose 1,6-bisphosphate + H2O = beta-D-fructose 6-phosphate + phosphate. Its pathway is carbohydrate biosynthesis; gluconeogenesis. This chain is Fructose-1,6-bisphosphatase class 1, found in Campylobacter jejuni subsp. jejuni serotype O:6 (strain 81116 / NCTC 11828).